The sequence spans 368 residues: Probable dual-specificity RNA methyltransferase RlmN (368 aa).

Catalysis depends on Glu100, which acts as the Proton acceptor. Residues 106-344 (QHYGLSVCVT…CVVRQEHGTD (239 aa)) enclose the Radical SAM core domain. An intrachain disulfide couples Cys113 to Cys349. [4Fe-4S] cluster contacts are provided by Cys120, Cys124, and Cys127. S-adenosyl-L-methionine contacts are provided by residues 172 to 173 (GE), Ser204, 227 to 229 (SLH), and Asn305. The active-site S-methylcysteine intermediate is Cys349.

The protein belongs to the radical SAM superfamily. RlmN family. [4Fe-4S] cluster is required as a cofactor.

The protein localises to the cytoplasm. It catalyses the reaction adenosine(2503) in 23S rRNA + 2 reduced [2Fe-2S]-[ferredoxin] + 2 S-adenosyl-L-methionine = 2-methyladenosine(2503) in 23S rRNA + 5'-deoxyadenosine + L-methionine + 2 oxidized [2Fe-2S]-[ferredoxin] + S-adenosyl-L-homocysteine. The catalysed reaction is adenosine(37) in tRNA + 2 reduced [2Fe-2S]-[ferredoxin] + 2 S-adenosyl-L-methionine = 2-methyladenosine(37) in tRNA + 5'-deoxyadenosine + L-methionine + 2 oxidized [2Fe-2S]-[ferredoxin] + S-adenosyl-L-homocysteine. Specifically methylates position 2 of adenine 2503 in 23S rRNA and position 2 of adenine 37 in tRNAs. The sequence is that of Probable dual-specificity RNA methyltransferase RlmN from Streptococcus agalactiae serotype Ia (strain ATCC 27591 / A909 / CDC SS700).